Reading from the N-terminus, the 194-residue chain is E3 ubiquitin-protein ligase RNF185 (194 aa).

Residues 1–32 (MASKGPTTSASTKSSSTGGTSGSSSSNGAGDN) are disordered. The tract at residues 31–82 (DNTNQDNTFECNICLDTAKDAVISLCGHLFCWPCLHQWLETRPNRQVCPVCK) is required for ubiquitin ligase activity and protection against ER stress-induced cell death. The RING-type zinc-finger motif lies at 41–82 (CNICLDTAKDAVISLCGHLFCWPCLHQWLETRPNRQVCPVCK). Positions 92 to 125 (PLYGRGSTGQQDPREKTPPRPQGQRPEPENRGGF) are disordered. The next 2 helical transmembrane spans lie at 133–153 (GGFQ…ATAF) and 174–194 (QFLS…LLIA).

It localises to the mitochondrion outer membrane. The protein resides in the endoplasmic reticulum membrane. It catalyses the reaction S-ubiquitinyl-[E2 ubiquitin-conjugating enzyme]-L-cysteine + [acceptor protein]-L-lysine = [E2 ubiquitin-conjugating enzyme]-L-cysteine + N(6)-ubiquitinyl-[acceptor protein]-L-lysine.. The protein operates within protein modification; protein ubiquitination. In terms of biological role, E3 ubiquitin-protein ligase that regulates selective mitochondrial autophagy by mediating 'Lys-63'-linked polyubiquitination. Acts in the endoplasmic reticulum (ER)-associated degradation (ERAD) pathway, which targets misfolded proteins that accumulate in the endoplasmic reticulum (ER) for ubiquitination and subsequent proteasome-mediated degradation. Protects cells from ER stress-induced apoptosis. Responsible for the cotranslational ubiquitination and degradation of CFTR in the ERAD pathway. Also acts as a regulator of the innate antiviral response by catalyzing 'Lys-27'-linked polyubiquitination of CGAS, thereby promoting CGAS cyclic GMP-AMP synthase activity. Preferentially associates with the E2 enzymes UBE2J1 and UBE2J2. This Gallus gallus (Chicken) protein is E3 ubiquitin-protein ligase RNF185 (RNF185).